Consider the following 101-residue polypeptide: Small ribosomal subunit protein uS14 (101 aa).

Belongs to the universal ribosomal protein uS14 family. Part of the 30S ribosomal subunit. Contacts proteins S3 and S10.

In terms of biological role, binds 16S rRNA, required for the assembly of 30S particles and may also be responsible for determining the conformation of the 16S rRNA at the A site. In Aliivibrio fischeri (strain MJ11) (Vibrio fischeri), this protein is Small ribosomal subunit protein uS14.